A 268-amino-acid polypeptide reads, in one-letter code: Undecaprenyl-diphosphatase (268 aa).

Transmembrane regions (helical) follow at residues 47–67, 85–105, 109–129, 144–164, 184–204, 217–237, and 246–266; these read FAVL…FSKL, IGVL…GGLI, LFNP…LLWV, FPLP…FPGV, AAEF…VYDL, LIVA…VKTF, and FALF…ALAL.

Belongs to the UppP family.

It localises to the cell inner membrane. It catalyses the reaction di-trans,octa-cis-undecaprenyl diphosphate + H2O = di-trans,octa-cis-undecaprenyl phosphate + phosphate + H(+). In terms of biological role, catalyzes the dephosphorylation of undecaprenyl diphosphate (UPP). Confers resistance to bacitracin. The sequence is that of Undecaprenyl-diphosphatase from Rhodopseudomonas palustris (strain BisA53).